A 357-amino-acid chain; its full sequence is Peptide chain release factor 1 (357 aa).

Glutamine 233 carries the N5-methylglutamine modification.

The protein belongs to the prokaryotic/mitochondrial release factor family. Post-translationally, methylated by PrmC. Methylation increases the termination efficiency of RF1.

The protein resides in the cytoplasm. Peptide chain release factor 1 directs the termination of translation in response to the peptide chain termination codons UAG and UAA. The protein is Peptide chain release factor 1 of Flavobacterium psychrophilum (strain ATCC 49511 / DSM 21280 / CIP 103535 / JIP02/86).